We begin with the raw amino-acid sequence, 231 residues long: Dephospho-CoA kinase domain-containing protein (231 aa).

Residues leucine 3 to leucine 207 enclose the DPCK domain. Glycine 8–serine 15 provides a ligand contact to ATP.

The protein belongs to the CoaE family.

This chain is Dephospho-CoA kinase domain-containing protein (Dcakd), found in Mus musculus (Mouse).